The sequence spans 133 residues: Large ribosomal subunit protein uL22 (133 aa).

It belongs to the universal ribosomal protein uL22 family. Part of the 50S ribosomal subunit.

This protein binds specifically to 23S rRNA; its binding is stimulated by other ribosomal proteins, e.g. L4, L17, and L20. It is important during the early stages of 50S assembly. It makes multiple contacts with different domains of the 23S rRNA in the assembled 50S subunit and ribosome. Functionally, the globular domain of the protein is located near the polypeptide exit tunnel on the outside of the subunit, while an extended beta-hairpin is found that lines the wall of the exit tunnel in the center of the 70S ribosome. The chain is Large ribosomal subunit protein uL22 from Aquifex aeolicus (strain VF5).